The chain runs to 367 residues: B2 bradykinin receptor (367 aa).

At 1-36 the chain is on the extracellular side; sequence MLNITSQVLAPALNGSVSQSSGCPNTEWSGWLNVIQ. 2 N-linked (GlcNAc...) asparagine glycosylation sites follow: Asn-3 and Asn-14. The chain crosses the membrane as a helical span at residues 37 to 60; the sequence is APFLWVLFVLATLENLFVLSVFCL. The Cytoplasmic portion of the chain corresponds to 61–69; it reads HKSSCTVAE. Residues 70 to 94 form a helical membrane-spanning segment; sequence VYLGNLAAADLILACGLPFWAVTIA. Residues 95–107 are Extracellular-facing; that stretch reads NHFDWLFGEALCR. Cys-106 and Cys-187 are disulfide-bonded. Residues 108-129 traverse the membrane as a helical segment; that stretch reads VVNTMIYMNLYSSICFLMLVSI. The Cytoplasmic portion of the chain corresponds to 130-151; it reads DRYLALVKTMSIGRMRRVRWAK. At Tyr-132 the chain carries Phosphotyrosine. A helical membrane pass occupies residues 152–174; the sequence is LYSLVIWGCTLLLSSPMLVFRTM. The Extracellular portion of the chain corresponds to 175-197; it reads KDYRDEGYNVTACIIDYPSRSWE. An N-linked (GlcNAc...) asparagine glycan is attached at Asn-183. A helical membrane pass occupies residues 198 to 224; sequence VFTNVLLNLVGFLLPLSVITFCTVQIL. Residues 225–243 lie on the Cytoplasmic side of the membrane; it reads QVLRNNEMQKFKEIQTERR. Residues 244-268 form a helical membrane-spanning segment; that stretch reads ATVLVLAVLLLFVVCWLPFQVSTFL. Over 269–287 the chain is Extracellular; the sequence is DTLLKLGVLSSCWDEHVID. A helical transmembrane segment spans residues 288–311; it reads VITQVGSFMGYSNSCLNPLVYVIV. Over 312–367 the chain is Cytoplasmic; that stretch reads GKRFRKKSREVYRAACPKAGCVLEPVQAESSMGTLRTSISVERQIHKLPEWTRSSQ. Phosphotyrosine is present on Tyr-323. Cys-327 carries the S-palmitoyl cysteine lipid modification. Ser-342 is subject to Phosphoserine. Residue Thr-345 is modified to Phosphothreonine. Phosphoserine; by GRK6 is present on residues Ser-349 and Ser-351.

This sequence belongs to the G-protein coupled receptor 1 family. Bradykinin receptor subfamily. BDKRB2 sub-subfamily. Forms a complex with PECAM1 and GNAQ. Interacts with PECAM1.

It is found in the cell membrane. Its function is as follows. Receptor for bradykinin. It is associated with G proteins that activate a phosphatidylinositol-calcium second messenger system. The sequence is that of B2 bradykinin receptor (BDKRB2) from Oryctolagus cuniculus (Rabbit).